The following is a 339-amino-acid chain: Aspartate carbamoyltransferase catalytic subunit (339 aa).

Residues Arg-60 and Thr-61 each coordinate carbamoyl phosphate. Lys-88 provides a ligand contact to L-aspartate. Residues Arg-110, His-143, and Gln-146 each contribute to the carbamoyl phosphate site. L-aspartate-binding residues include Arg-183 and Arg-254. Carbamoyl phosphate is bound by residues Gly-295 and Pro-296.

It belongs to the aspartate/ornithine carbamoyltransferase superfamily. ATCase family. As to quaternary structure, heterododecamer (2C3:3R2) of six catalytic PyrB chains organized as two trimers (C3), and six regulatory PyrI chains organized as three dimers (R2).

It carries out the reaction carbamoyl phosphate + L-aspartate = N-carbamoyl-L-aspartate + phosphate + H(+). Its pathway is pyrimidine metabolism; UMP biosynthesis via de novo pathway; (S)-dihydroorotate from bicarbonate: step 2/3. In terms of biological role, catalyzes the condensation of carbamoyl phosphate and aspartate to form carbamoyl aspartate and inorganic phosphate, the committed step in the de novo pyrimidine nucleotide biosynthesis pathway. The chain is Aspartate carbamoyltransferase catalytic subunit from Prochlorococcus marinus (strain MIT 9312).